Reading from the N-terminus, the 878-residue chain is Alanine--tRNA ligase (878 aa).

Zn(2+)-binding residues include histidine 558, histidine 562, cysteine 663, and histidine 667.

Belongs to the class-II aminoacyl-tRNA synthetase family. Zn(2+) is required as a cofactor.

It is found in the cytoplasm. The catalysed reaction is tRNA(Ala) + L-alanine + ATP = L-alanyl-tRNA(Ala) + AMP + diphosphate. Functionally, catalyzes the attachment of alanine to tRNA(Ala) in a two-step reaction: alanine is first activated by ATP to form Ala-AMP and then transferred to the acceptor end of tRNA(Ala). Also edits incorrectly charged Ser-tRNA(Ala) and Gly-tRNA(Ala) via its editing domain. This chain is Alanine--tRNA ligase, found in Mycoplasmopsis synoviae (strain 53) (Mycoplasma synoviae).